Consider the following 509-residue polypeptide: MNEDKDTDSKKSEEYEDDFEKDLEWLINENEKSDASIIEMACEKEENINQDLKENETVIEHTKQHSDPDKSLQDEVSPRKNDIISVPGIQPLDPISDSDSENSFQESRLESQKDLEEEEDEEVRRYIMEKIVQANKLLQNQEPVNDKRERKLKFEDKLVDLEVPPLEDTTTSKNYFENERNMFGKLSQLCISNDFGQENVLLSLTNVSCEENKDRTILVERDGKFELLNLQDIASQGFLPPINNANTTENDPQQLLPRSSNSSVSGTKKEDSAAKIHAVTHSSTGKPLAYIPQPPLNRKTCPSSAVISDQSKGNGNSNHRAQSAHISPVTSTCCLSPRQKELQKQLEQKREKLKREEERRKIEEEKEKKRENDIVFKAWLQKKREQVLEMRRIQRAKEIEDMNSRQENRDPQQAFRLWLKKKHEEQMKERQTEELRKQEECLFFLKGTEGRERAFKQWLRRKRIEKMAEQQAVRERTRQLRLEAKRSKQLQHHLYMSEAKPFRFTDHYN.

A compositionally biased stretch (basic and acidic residues) spans 58 to 82 (VIEHTKQHSDPDKSLQDEVSPRKND). Disordered stretches follow at residues 58–120 (VIEH…EEED), 241–332 (PINN…VTST), and 345–367 (QLEQKREKLKREEERRKIEEEKE). Composition is skewed to polar residues over residues 243–266 (NNANTTENDPQQLLPRSSNSSVSG) and 300–332 (TCPSSAVISDQSKGNGNSNHRAQSAHISPVTST). Residues 335-375 (LSPRQKELQKQLEQKREKLKREEERRKIEEEKEKKRENDIV) adopt a coiled-coil conformation.

This sequence belongs to the CCDC181 family. Homodimer. Interacts with HOOK1. Interacts with HOOK2. Interacts with HOOK3.

It localises to the cytoplasm. Its subcellular location is the cytoskeleton. It is found in the cell projection. The protein localises to the cilium. The protein resides in the flagellum. Its function is as follows. Microtubule-binding protein that localizes to the microtubular manchette of elongating spermatids. This is Coiled-coil domain-containing protein 181 from Pongo abelii (Sumatran orangutan).